Consider the following 340-residue polypeptide: Protein-tyrosine-phosphatase PTP1 (340 aa).

Residues I58 to E326 form the Tyrosine-protein phosphatase domain. Residues D234, C265–R271, and Q311 contribute to the substrate site. The active-site Phosphocysteine intermediate is the C265.

In terms of assembly, interacts with MPK6. Interacts with KIN10. Post-translationally, phosphorylated by KIN10. In terms of tissue distribution, expressed in roots, stems and flowers, and at low levels in leaves.

Its subcellular location is the cytoplasm. It localises to the cytosol. The protein resides in the nucleus. The catalysed reaction is O-phospho-L-tyrosyl-[protein] + H2O = L-tyrosyl-[protein] + phosphate. With respect to regulation, inhibited by hydrogen peroxide. Protein-tyrosine-phosphatase that dephosphorylates and probably inhibits MPK6 in non-oxidative stress conditions. In association with MKP1, represses salicylic acid (SA) and camalexin biosynthesis, thus modulating defense response. May also repress MPK3. Dephosphorylates and inactivates MPK4 in vitro. The chain is Protein-tyrosine-phosphatase PTP1 (PTP1) from Arabidopsis thaliana (Mouse-ear cress).